Here is a 92-residue protein sequence, read N- to C-terminus: Small ribosomal subunit protein uS19 (92 aa).

This sequence belongs to the universal ribosomal protein uS19 family.

Protein S19 forms a complex with S13 that binds strongly to the 16S ribosomal RNA. The protein is Small ribosomal subunit protein uS19 of Roseobacter denitrificans (strain ATCC 33942 / OCh 114) (Erythrobacter sp. (strain OCh 114)).